A 129-amino-acid polypeptide reads, in one-letter code: Small ribosomal subunit protein uS11 (129 aa).

It belongs to the universal ribosomal protein uS11 family. As to quaternary structure, part of the 30S ribosomal subunit. Interacts with proteins S7 and S18. Binds to IF-3.

Its function is as follows. Located on the platform of the 30S subunit, it bridges several disparate RNA helices of the 16S rRNA. Forms part of the Shine-Dalgarno cleft in the 70S ribosome. The sequence is that of Small ribosomal subunit protein uS11 from Parabacteroides distasonis (strain ATCC 8503 / DSM 20701 / CIP 104284 / JCM 5825 / NCTC 11152).